A 341-amino-acid chain; its full sequence is Phosphate acyltransferase (341 aa).

It belongs to the PlsX family. As to quaternary structure, homodimer. Probably interacts with PlsY.

It localises to the cytoplasm. The enzyme catalyses a fatty acyl-[ACP] + phosphate = an acyl phosphate + holo-[ACP]. The protein operates within lipid metabolism; phospholipid metabolism. In terms of biological role, catalyzes the reversible formation of acyl-phosphate (acyl-PO(4)) from acyl-[acyl-carrier-protein] (acyl-ACP). This enzyme utilizes acyl-ACP as fatty acyl donor, but not acyl-CoA. This Vibrio campbellii (strain ATCC BAA-1116) protein is Phosphate acyltransferase.